Here is a 496-residue protein sequence, read N- to C-terminus: Probable cytosol aminopeptidase (496 aa).

Mn(2+) is bound by residues Lys-257 and Asp-262. The active site involves Lys-269. Mn(2+)-binding residues include Asp-281, Asp-341, and Glu-343. Arg-345 is an active-site residue.

Belongs to the peptidase M17 family. The cofactor is Mn(2+).

The protein localises to the cytoplasm. The catalysed reaction is Release of an N-terminal amino acid, Xaa-|-Yaa-, in which Xaa is preferably Leu, but may be other amino acids including Pro although not Arg or Lys, and Yaa may be Pro. Amino acid amides and methyl esters are also readily hydrolyzed, but rates on arylamides are exceedingly low.. It carries out the reaction Release of an N-terminal amino acid, preferentially leucine, but not glutamic or aspartic acids.. Functionally, presumably involved in the processing and regular turnover of intracellular proteins. Catalyzes the removal of unsubstituted N-terminal amino acids from various peptides. This chain is Probable cytosol aminopeptidase, found in Synechococcus sp. (strain CC9311).